Here is a 64-residue protein sequence, read N- to C-terminus: Large ribosomal subunit protein bL35 (64 aa).

Basic residues-rich tracts occupy residues 1–15 (MPKNKTHSGASKRFK) and 27–42 (AGKRHLLEHKSSKKTR). The interval 1-45 (MPKNKTHSGASKRFKITGSGKVLRERAGKRHLLEHKSSKKTRSLT) is disordered.

This sequence belongs to the bacterial ribosomal protein bL35 family.

The polypeptide is Large ribosomal subunit protein bL35 (Streptomyces griseus subsp. griseus (strain JCM 4626 / CBS 651.72 / NBRC 13350 / KCC S-0626 / ISP 5235)).